Reading from the N-terminus, the 379-residue chain is Protein-glutamate methylesterase/protein-glutamine glutaminase (379 aa).

Residues 4 to 121 (KILVVDDSIF…AANRQDAVAL (118 aa)) enclose the Response regulatory domain. Asp55 carries the post-translational modification 4-aspartylphosphate. The CheB-type methylesterase domain occupies 186–379 (SGKKYRCLAI…FESHILKEMA (194 aa)). Active-site residues include Ser198, His225, and Asp323.

Belongs to the CheB family. In terms of processing, phosphorylated by CheA. Phosphorylation of the N-terminal regulatory domain activates the methylesterase activity.

The protein resides in the cytoplasm. It carries out the reaction [protein]-L-glutamate 5-O-methyl ester + H2O = L-glutamyl-[protein] + methanol + H(+). It catalyses the reaction L-glutaminyl-[protein] + H2O = L-glutamyl-[protein] + NH4(+). Functionally, involved in chemotaxis. Part of a chemotaxis signal transduction system that modulates chemotaxis in response to various stimuli. Catalyzes the demethylation of specific methylglutamate residues introduced into the chemoreceptors (methyl-accepting chemotaxis proteins or MCP) by CheR. Also mediates the irreversible deamidation of specific glutamine residues to glutamic acid. The chain is Protein-glutamate methylesterase/protein-glutamine glutaminase from Pseudoalteromonas atlantica (strain T6c / ATCC BAA-1087).